Here is a 330-residue protein sequence, read N- to C-terminus: MSLSSLDAVLSLIATSSTLDQDSAKVPQCQVCKRKFANQKTLRTHMKHITCRPGRSNVVNHKFRCENCEKQFTNKPNLKRHQITHSGSKSKKCSTCQRTFFREDQLQRHLHNHLKERSHFDCPVLNCSMQFVFYEGVENHLVNHHHFSYSESAPCGKCHKLFGSPRHLLVHYHFDHKEALRSSAPAPTSSARLSPITVSTSGSPRAQLAISPQEKPPQKLSINLGTSPMIEEFCEQNSATLPNTDQQLSPTLSPNEPRFRNLITSEPTPSFECKHCTIKFHDATMSIMHNALHAPGSPFKCAICGAECGNKIVFTMHIITASHDFGGIGT.

5 C2H2-type zinc fingers span residues 27 to 48 (PQCQ…HMKH), 63 to 85 (FRCE…QITH), 91 to 113 (KKCS…LHNH), 120 to 144 (FDCP…LVNH), and 153 to 176 (APCG…HFDH). Low complexity predominate over residues 183–195 (SAPAPTSSARLSP). Residues 183–203 (SAPAPTSSARLSPITVSTSGS) are disordered. A C2H2-type 6 zinc finger spans residues 271–293 (FECKHCTIKFHDATMSIMHNALH).

This sequence belongs to the krueppel C2H2-type zinc-finger protein family. In terms of tissue distribution, expressed in the somatic gonad.

In terms of biological role, together with ehn-3, may play a role in gonadogenesis. The sequence is that of Zinc finger protein sdz-12 from Caenorhabditis elegans.